The primary structure comprises 353 residues: ATP-dependent kinase YFH7 (353 aa).

31–39 (GSPGSGKST) is a binding site for ATP.

Belongs to the YFH7 family.

Functionally, ATP-dependent kinase that could be involved in endoplasmic reticulum membrane assembly. This Saccharomyces cerevisiae (strain ATCC 204508 / S288c) (Baker's yeast) protein is ATP-dependent kinase YFH7 (YFH7).